We begin with the raw amino-acid sequence, 212 residues long: Thymidylate kinase (212 aa).

10 to 17 (GIDGCGKT) is an ATP binding site.

Belongs to the thymidylate kinase family.

It carries out the reaction dTMP + ATP = dTDP + ADP. Its function is as follows. Phosphorylation of dTMP to form dTDP in both de novo and salvage pathways of dTTP synthesis. This Prochlorococcus marinus (strain MIT 9301) protein is Thymidylate kinase.